Reading from the N-terminus, the 420-residue chain is MKTLIARHKAGEHIGICSVCSAHPLVIEAALAFDRNSTRKVLIEATSNQVNQFGGYTGMTPADFREFVFTIADKVGFARERIILGGDHLGPNCWQQENADAAMEKSVELVKEYVRAGFSKIHLDASMSCAGDPIPLAPETVAERAAVLCFAAESVATDCQREQLSYVIGTEVPVPGGEASAIQSVHITHVEDTANTLRTHQKAFIARGLTEALTRVIAIVVQPGVEFDHSNIIHYQPQEAQPLAQWIENTRMVYEAHSTDYQTRTAYWELVRDHFAILKVGPALTFALREAIFALAQIEQELIAPENRSGCLAVIEEVMLDEPQYWKKYYRTGFNDSLLDIRYSLSDRIRYYWPHSRIKNSVETMMVNLEGVDIPLGMISQYLPKQFERIQSGELSAIPHQLIMDKIYDVLRAYRYGCAE.

The protein belongs to the GatZ/KbaZ family. GatZ subfamily. As to quaternary structure, forms a complex with GatY.

It participates in carbohydrate metabolism; D-tagatose 6-phosphate degradation; D-glyceraldehyde 3-phosphate and glycerone phosphate from D-tagatose 6-phosphate: step 2/2. In terms of biological role, component of the tagatose-1,6-bisphosphate aldolase GatYZ that is required for full activity and stability of the Y subunit. Could have a chaperone-like function for the proper and stable folding of GatY. When expressed alone, GatZ does not show any aldolase activity. Is involved in the catabolism of galactitol. The protein is D-tagatose-1,6-bisphosphate aldolase subunit GatZ of Escherichia coli (strain SE11).